The chain runs to 431 residues: Phosphate regulon sensor protein PhoR (431 aa).

Topologically, residues 1-9 are cytoplasmic; it reads MLERLSWKR. Residues 10 to 28 traverse the membrane as a helical segment; the sequence is LVLELLLCCLPAFILGAFF. The Periplasmic segment spans residues 29 to 32; it reads GYLP. A helical transmembrane segment spans residues 33 to 51; it reads WFLLASVTGLLIWHFWNLL. The Cytoplasmic portion of the chain corresponds to 52-431; it reads RLSWWLWVDR…PERLIAKNSD (380 aa). Positions 96 to 172 constitute a PAS domain; sequence LIKRFRSGAE…RPLNLVLNTG (77 aa). The Histidine kinase domain occupies 210–425; it reads NVSHELRTPL…RFSFVIPERL (216 aa). Histidine 213 carries the post-translational modification Phosphohistidine; by autocatalysis.

The protein resides in the cell inner membrane. It catalyses the reaction ATP + protein L-histidine = ADP + protein N-phospho-L-histidine.. Functionally, member of the two-component regulatory system PhoR/PhoB involved in the phosphate regulon genes expression. PhoR may function as a membrane-associated protein kinase that phosphorylates PhoB in response to environmental signals. This chain is Phosphate regulon sensor protein PhoR (phoR), found in Escherichia coli (strain K12).